The chain runs to 63 residues: Small ribosomal subunit protein eS27 (63 aa).

The Zn(2+) site is built by cysteine 18, cysteine 21, cysteine 37, and cysteine 40. The segment at 18–40 adopts a C4-type zinc-finger fold; it reads CLDCGNQQVVFDRAASYVQCIIC.

The protein belongs to the eukaryotic ribosomal protein eS27 family. Part of the 30S ribosomal subunit. Requires Zn(2+) as cofactor.

The protein is Small ribosomal subunit protein eS27 of Methanothermobacter thermautotrophicus (strain ATCC 29096 / DSM 1053 / JCM 10044 / NBRC 100330 / Delta H) (Methanobacterium thermoautotrophicum).